Reading from the N-terminus, the 314-residue chain is Olfactory receptor 5B17 (314 aa).

Residues 1 to 23 are Extracellular-facing; sequence MENNTEVSEFILLGLTNAPELQV. A glycan (N-linked (GlcNAc...) asparagine) is linked at N3. A helical membrane pass occupies residues 24-44; it reads PLFIMFTLIYLITLTGNLGMI. Residues 45-52 are Cytoplasmic-facing; it reads ILILLDSH. A helical membrane pass occupies residues 53–73; the sequence is LHTPMYFFLSNLSLAGIGYSS. Topologically, residues 74-97 are extracellular; sequence AVTPKVLTGLLIEDKAISYSACAA. Cysteines 95 and 187 form a disulfide. Residues 98-118 traverse the membrane as a helical segment; it reads QMFFCAVFATVENYLLSSMAY. The Cytoplasmic segment spans residues 119-137; it reads DRYAAVCNPLHYTTTMTTR. Residues 138 to 158 form a helical membrane-spanning segment; the sequence is VCACLAIGCYVIGFLNASIQI. The Extracellular portion of the chain corresponds to 159-194; it reads GDTFRLSFCMSNVIHHFFCDKPAVITLTCSEKHISE. A helical membrane pass occupies residues 195 to 215; sequence LILVLISSFNVFFALLVTLIS. Residues 216–235 are Cytoplasmic-facing; that stretch reads YLFILITILKRHTGKGYQKP. Residues 236–256 form a helical membrane-spanning segment; that stretch reads LSTCGSHLIAIFLFYITVIIM. Topologically, residues 257–269 are extracellular; the sequence is YIRPSSSHSMDTD. Residues 270–290 traverse the membrane as a helical segment; the sequence is KIASVFYTMIIPMLSPIVYTL. Residues 291–314 lie on the Cytoplasmic side of the membrane; the sequence is RNKDVKNAFMKVVEKAKYSLDSVF.

The protein belongs to the G-protein coupled receptor 1 family.

Its subcellular location is the cell membrane. Odorant receptor. This is Olfactory receptor 5B17 (OR5B17) from Homo sapiens (Human).